The sequence spans 183 residues: MGIAECYEQKMKKSLSALQEGFNTLRTERATAHLLDQITVDYYQQPTALSQVATVSVPEARLIIIQPWDKTLLADIERAILKSKLSLNPSNDGKVIRLVIPPLTQERRKELVRQARALAEQARVAIRNIRREGIEEAKRGHKEGLLSEDALKAAEEAFQKATDASVADVARYLAEKEKDILEG.

The protein belongs to the RRF family.

The protein resides in the cytoplasm. In terms of biological role, responsible for the release of ribosomes from messenger RNA at the termination of protein biosynthesis. May increase the efficiency of translation by recycling ribosomes from one round of translation to another. The chain is Ribosome-recycling factor from Treponema pallidum (strain Nichols).